We begin with the raw amino-acid sequence, 439 residues long: Arginine biosynthesis bifunctional protein ArgJ, mitochondrial (439 aa).

The substrate site is built by Thr175, Lys201, Thr212, Glu301, Asn434, and Ser439. Catalysis depends on Thr212, which acts as the Nucleophile.

The protein belongs to the ArgJ family. Heterodimer of an alpha and a beta chain. In terms of processing, the alpha and beta chains are autoproteolytically processed from a single precursor protein within the mitochondrion.

Its subcellular location is the mitochondrion matrix. The catalysed reaction is N(2)-acetyl-L-ornithine + L-glutamate = N-acetyl-L-glutamate + L-ornithine. It carries out the reaction L-glutamate + acetyl-CoA = N-acetyl-L-glutamate + CoA + H(+). The protein operates within amino-acid biosynthesis; L-arginine biosynthesis; L-ornithine and N-acetyl-L-glutamate from L-glutamate and N(2)-acetyl-L-ornithine (cyclic): step 1/1. It participates in amino-acid biosynthesis; L-arginine biosynthesis; N(2)-acetyl-L-ornithine from L-glutamate: step 1/4. Catalyzes two activities which are involved in the cyclic version of arginine biosynthesis: the synthesis of acetylglutamate from glutamate and acetyl-CoA, and of ornithine by transacetylation between acetylornithine and glutamate. The polypeptide is Arginine biosynthesis bifunctional protein ArgJ, mitochondrial (Candida albicans (strain WO-1) (Yeast)).